A 530-amino-acid polypeptide reads, in one-letter code: uncharacterized protein (530 aa).

Positions 485-529 form a coiled coil; sequence SKEENREIKLSIRENKEKQRKKSVEKSVSKLQNQLNRLLNKNTIE.

This is an uncharacterized protein from Acanthamoeba polyphaga (Amoeba).